The following is a 120-amino-acid chain: Small ribosomal subunit protein uS13 (120 aa).

The disordered stretch occupies residues 93–120 (RRGLPCRGQKTKTNARTRKGKRKTVGAA).

Belongs to the universal ribosomal protein uS13 family. Part of the 30S ribosomal subunit. Forms a loose heterodimer with protein S19. Forms two bridges to the 50S subunit in the 70S ribosome.

Functionally, located at the top of the head of the 30S subunit, it contacts several helices of the 16S rRNA. In the 70S ribosome it contacts the 23S rRNA (bridge B1a) and protein L5 of the 50S subunit (bridge B1b), connecting the 2 subunits; these bridges are implicated in subunit movement. Contacts the tRNAs in the A and P-sites. The sequence is that of Small ribosomal subunit protein uS13 from Sulfurimonas denitrificans (strain ATCC 33889 / DSM 1251) (Thiomicrospira denitrificans (strain ATCC 33889 / DSM 1251)).